The primary structure comprises 476 residues: Bifunctional protein HldE (476 aa).

The ribokinase stretch occupies residues 1–318 (MKVTLPDFRR…ENAIRGRAET (318 aa)). An ATP-binding site is contributed by 195 to 198 (NLSE). Asp-264 is a catalytic residue. The cytidylyltransferase stretch occupies residues 344–476 (MTNGIFDILH…IIQSIKNGRG (133 aa)).

In the N-terminal section; belongs to the carbohydrate kinase PfkB family. It in the C-terminal section; belongs to the cytidylyltransferase family. In terms of assembly, homodimer.

The catalysed reaction is D-glycero-beta-D-manno-heptose 7-phosphate + ATP = D-glycero-beta-D-manno-heptose 1,7-bisphosphate + ADP + H(+). The enzyme catalyses D-glycero-beta-D-manno-heptose 1-phosphate + ATP + H(+) = ADP-D-glycero-beta-D-manno-heptose + diphosphate. It participates in nucleotide-sugar biosynthesis; ADP-L-glycero-beta-D-manno-heptose biosynthesis; ADP-L-glycero-beta-D-manno-heptose from D-glycero-beta-D-manno-heptose 7-phosphate: step 1/4. Its pathway is nucleotide-sugar biosynthesis; ADP-L-glycero-beta-D-manno-heptose biosynthesis; ADP-L-glycero-beta-D-manno-heptose from D-glycero-beta-D-manno-heptose 7-phosphate: step 3/4. Functionally, catalyzes the phosphorylation of D-glycero-D-manno-heptose 7-phosphate at the C-1 position to selectively form D-glycero-beta-D-manno-heptose-1,7-bisphosphate. In terms of biological role, catalyzes the ADP transfer from ATP to D-glycero-beta-D-manno-heptose 1-phosphate, yielding ADP-D-glycero-beta-D-manno-heptose. The polypeptide is Bifunctional protein HldE (Yersinia pseudotuberculosis serotype O:1b (strain IP 31758)).